A 122-amino-acid polypeptide reads, in one-letter code: Thioredoxin H-type (122 aa).

The Thioredoxin domain maps to A2–A118. An intrachain disulfide couples C40 to C43.

The protein localises to the cytoplasm. In terms of biological role, participates in various redox reactions through the reversible oxidation of the active center dithiol to a disulfide. The H form is known to activate a number of cytosolic enzymes. In Oryza sativa subsp. indica (Rice), this protein is Thioredoxin H-type (TRXH).